A 240-amino-acid polypeptide reads, in one-letter code: MAQTSKYKRVVLKLSGEALAGDKGFGINPIIIKSVAQQVAEVAKMDCEIAVIVGGGNIWRGKTGSDLGMDRGTADYMGMLATVMNALALQDSLEQLECDTRVLTSIEMKQVAEPYIRRRAIRHLEKKRVVIFAAGIGNPYFSTDTTAALRAAEVEADVILMGKNNVDGVYSADPKVDKNAVKYEHLTHIQMLQEGLQVMDSTASSFCMDNNIPLNVFSIMEEGNIKRAVMGEKIGTLITK.

Position 13-16 (13-16) interacts with ATP; that stretch reads KLSG. Residues 21 to 26 form an involved in allosteric activation by GTP region; that stretch reads GDKGFG. Residue G55 coordinates UMP. ATP contacts are provided by G56 and R60. Residues D75 and 136–143 contribute to the UMP site; that span reads IGNPYFST. Positions 164, 170, and 173 each coordinate ATP.

The protein belongs to the UMP kinase family. Homohexamer.

Its subcellular location is the cytoplasm. The catalysed reaction is UMP + ATP = UDP + ADP. It functions in the pathway pyrimidine metabolism; CTP biosynthesis via de novo pathway; UDP from UMP (UMPK route): step 1/1. With respect to regulation, allosterically activated by GTP. Inhibited by UTP. Functionally, catalyzes the reversible phosphorylation of UMP to UDP. This is Uridylate kinase from Staphylococcus haemolyticus (strain JCSC1435).